The primary structure comprises 711 residues: Zinc finger CCCH domain-containing protein 43 (711 aa).

The tract at residues 1–49 (MPQDDDWFWGRPTPVVVGDGETTSKPKPPVAGKTKKVEEQHPRRPGEPD) is disordered. Residues 35–47 (KKVEEQHPRRPGE) show a composition bias toward basic and acidic residues. 3 C3H1-type zinc fingers span residues 44 to 72 (RPGEPDCSYYVKFGSCKFGISCVYNHPDP), 90 to 118 (RPGEPDCSYYVKFGSCKFGMNCRFNHPPR), and 157 to 185 (RPGTGLCSYYMNRGICKFGTNCKFDHPDP). The 254-residue stretch at 384–637 (LKTLKSILNT…GAISYLIEKE (254 aa)) folds into the MIF4G domain.

In Oryza sativa subsp. japonica (Rice), this protein is Zinc finger CCCH domain-containing protein 43.